An 81-amino-acid chain; its full sequence is UPF0729 protein C18orf32 homolog (81 aa).

Positions 45 to 58 (AASDQKVSEKSNGT) are enriched in polar residues. Residues 45–81 (AASDQKVSEKSNGTCKPESNGEATANGSTIAADKKTD) form a disordered region.

This sequence belongs to the UPF0729 family.

The chain is UPF0729 protein C18orf32 homolog from Anoplopoma fimbria (Sablefish).